The following is a 2546-amino-acid chain: Formin-J (2546 aa).

13 disordered regions span residues 1–40 (MEEN…SFVK), 61–108 (ENSN…PLSE), 188–270 (KNIT…PNSA), 369–414 (TTNN…SSSS), 502–541 (TNSF…TPNS), 802–849 (SSIS…NTRK), 879–898 (TSVP…NNNN), 987–1101 (TTNN…GGIG), 1485–1529 (PKSK…ASLS), 1558–1601 (KRSK…FKSP), 1659–1775 (INNI…KVNS), 1840–1869 (VPTT…ETQS), and 2014–2033 (SNLS…SSLE). 2 stretches are compositionally biased toward low complexity: residues 16-37 (NNNE…SSSS) and 62-98 (NSNN…NSTS). Polar residues-rich tracts occupy residues 99–108 (GSKDNTPLSE) and 188–198 (KNITPSKNNSP). Low complexity-rich tracts occupy residues 203 to 237 (NNNN…NNNN) and 247 to 270 (NKNS…PNSA). Residues 377–389 (AESLTTYSESSEI) show a composition bias toward polar residues. 2 stretches are compositionally biased toward low complexity: residues 390 to 414 (STDS…SSSS) and 502 to 513 (TNSFGSSTTTTI). One can recognise an FHA domain in the interval 391–444 (TDSTGVCSSSSSTSSTLSSKSSSSSSFNKFMEFLLIYIEDNDSTNGTWVNGNKL). The region spanning 457 to 963 (KITLSTPDFS…SSISNEQEYQ (507 aa)) is the GBD/FH3 domain. Composition is skewed to polar residues over residues 879-891 (TSVP…KNPL) and 992-1007 (SSAK…NKSP). Pro residues predominate over residues 1033–1042 (VPPPPPPPPG). Residues 1043 to 1056 (GNNNNESDVPSSSG) are compositionally biased toward low complexity. Over residues 1057–1097 (GPPPPPPPPPPPGKSSGGGPPPPPPPPPKGGKGGPPPPPPI) the composition is skewed to pro residues. The FH1 domain occupies 1072-1098 (SGGGPPPPPPPPPKGGKGGPPPPPPIG). Residues 1106–1495 (KVKEEQPSVP…KSKKYQEQQN (390 aa)) enclose the FH2 domain. The span at 1492-1502 (EQQNKPTQNND) shows a compositional bias: polar residues. The span at 1507-1529 (SKLSNLPSSSSINDESSSSASLS) shows a compositional bias: low complexity. Residues 1563–1593 (EQEPVVEPIQITPKVGSAASAEPSPSIKSRD) enclose the DAD domain. Low complexity predominate over residues 1665 to 1679 (SSSSSSSSSSSSSSS). A compositionally biased stretch (basic and acidic residues) spans 1687–1717 (HNTESEIKKEFISNSSMDKDKEKIKEKEKGT). The span at 1732-1745 (KSTTTSPSSSSSKK) shows a compositional bias: low complexity. Residues 1746 to 1757 (QIPSLSECLQES) show a composition bias toward polar residues. Low complexity-rich tracts occupy residues 1763 to 1775 (RSSS…KVNS) and 1841 to 1853 (PTTT…TTQT). Residues 2067–2118 (IDDNQQKQQKQQQQQQQQQQQQQQLPQPQQQQQQQQQQQQQQQQQQQQQQQQ) are a coiled coil. Residues 2121-2154 (QQSTTTTTISTHHPQLKQVQPQSPSSLSQQPTQQ) are compositionally biased toward low complexity. 3 disordered regions span residues 2121–2369 (QQST…PKTV), 2381–2473 (SHKK…SYSS), and 2485–2510 (SPSS…LKTP). A compositionally biased stretch (polar residues) spans 2160–2179 (QPSSPLQSHYKPQQKPQTTY). Low complexity-rich tracts occupy residues 2188–2206 (ANPF…SNAS) and 2237–2256 (SSAS…TPLS). Residues 2274 to 2287 (TPPSSSISNSTATT) are compositionally biased toward polar residues. The span at 2302–2315 (SPSSSSLEQSSNAS) shows a compositional bias: low complexity. The span at 2332 to 2342 (FKKHKKSHSKS) shows a compositional bias: basic residues. Composition is skewed to low complexity over residues 2388–2439 (VDQS…SSSS), 2459–2473 (NISS…SYSS), and 2485–2497 (SPSS…KPSP). The segment covering 2499 to 2508 (AVSSTSSTLK) has biased composition (polar residues).

Belongs to the formin homology family. Diaphanous subfamily. In terms of assembly, interacts (via GBD/FH3 domain) with activated Rho-GTPases.

In terms of biological role, formins play an important role in the nucleation of actin and the formation of linear actin filaments. The chain is Formin-J (forJ) from Dictyostelium discoideum (Social amoeba).